The following is a 500-amino-acid chain: NAD(P)H-quinone oxidoreductase chain 4, chloroplastic (500 aa).

A run of 14 helical transmembrane segments spans residues 4–24, 37–57, 87–107, 113–130, 134–154, 167–187, 208–228, 242–262, 272–292, 305–325, 330–350, 386–406, 416–436, and 462–482; these read FPWLTIIVLFPISAGSFIFFL, IGICLLELLLITYAFCYFFQL, IGPILLTGFITTLATLAAWPV, LFHFLMLAMYSGQIGLFS, LLLFFIMWELELIPVYLLLSM, FILYTAGGSIFLLMGVLGMGL, ALEILFYFGFLIAYAVKLPII, HYSTCMLLAGILLKMGAYGLI, AHSIFSPWLMIVGTVQIIYAA, IAYSSVSHMGFIIIGICSITD, GAVLQIISHGFIGAALFFLAG, LALPGMSGFVAELIVFFGIIT, VLITFVMAIGIILTPIYSLSM, and LFISICILLPVIGIGIYPDFV.

Belongs to the complex I subunit 4 family.

The protein localises to the plastid. It localises to the chloroplast thylakoid membrane. The catalysed reaction is a plastoquinone + NADH + (n+1) H(+)(in) = a plastoquinol + NAD(+) + n H(+)(out). The enzyme catalyses a plastoquinone + NADPH + (n+1) H(+)(in) = a plastoquinol + NADP(+) + n H(+)(out). In Ceratophyllum demersum (Rigid hornwort), this protein is NAD(P)H-quinone oxidoreductase chain 4, chloroplastic.